We begin with the raw amino-acid sequence, 191 residues long: Cytochrome c oxidase assembly protein CtaG (191 aa).

Residues 1 to 9 (MSLSPHQKT) are Cytoplasmic-facing. Residues 10–30 (AGGLVLVVAVMGAASFAAVPF) form a helical; Signal-anchor for type II membrane protein membrane-spanning segment. Topologically, residues 31–191 (YNWFCRVTGF…LAAESATDVN (161 aa)) are periplasmic.

Belongs to the COX11/CtaG family.

It localises to the cell inner membrane. Exerts its effect at some terminal stage of cytochrome c oxidase synthesis, probably by being involved in the insertion of the copper B into subunit I. This Cereibacter sphaeroides (strain ATCC 17023 / DSM 158 / JCM 6121 / CCUG 31486 / LMG 2827 / NBRC 12203 / NCIMB 8253 / ATH 2.4.1.) (Rhodobacter sphaeroides) protein is Cytochrome c oxidase assembly protein CtaG.